A 116-amino-acid chain; its full sequence is Large ribosomal subunit protein bL17 (116 aa).

It belongs to the bacterial ribosomal protein bL17 family. As to quaternary structure, part of the 50S ribosomal subunit. Contacts protein L32.

The sequence is that of Large ribosomal subunit protein bL17 from Gloeothece citriformis (strain PCC 7424) (Cyanothece sp. (strain PCC 7424)).